The primary structure comprises 170 residues: RNA pyrophosphohydrolase (170 aa).

Positions 6 to 149 (GFRPNVGIIL…KRDVYRRALK (144 aa)) constitute a Nudix hydrolase domain. The Nudix box motif lies at 39–60 (GGIKHNESPENALYRELEEEVG).

The protein belongs to the Nudix hydrolase family. RppH subfamily. A divalent metal cation serves as cofactor.

Functionally, accelerates the degradation of transcripts by removing pyrophosphate from the 5'-end of triphosphorylated RNA, leading to a more labile monophosphorylated state that can stimulate subsequent ribonuclease cleavage. The polypeptide is RNA pyrophosphohydrolase (Saccharophagus degradans (strain 2-40 / ATCC 43961 / DSM 17024)).